Here is a 224-residue protein sequence, read N- to C-terminus: Urease accessory protein UreF (224 aa).

The protein belongs to the UreF family. UreD, UreF and UreG form a complex that acts as a GTP-hydrolysis-dependent molecular chaperone, activating the urease apoprotein by helping to assemble the nickel containing metallocenter of UreC. The UreE protein probably delivers the nickel.

Its subcellular location is the cytoplasm. Its function is as follows. Required for maturation of urease via the functional incorporation of the urease nickel metallocenter. The sequence is that of Urease accessory protein UreF from Klebsiella pneumoniae subsp. pneumoniae (strain ATCC 700721 / MGH 78578).